The chain runs to 765 residues: Ubiquitin-like modifier-activating enzyme atg7 (765 aa).

The short motif at Gly-436–Gly-441 is the GXGXXG motif element. Residue Cys-616 is the Glycyl thioester intermediate of the active site. Disordered regions lie at residues Ala-646–His-670 and Ala-744–Leu-765. The segment at Ala-721–Glu-760 is homodimerization. Acidic residues predominate over residues Val-748 to Leu-765.

It belongs to the ATG7 family. Homodimer. Interacts with ATG8 through a thioester bond between Cys-616 and the C-terminal Gly of ATG8 and with ATG12 through a thioester bond between Cys-616 and the C-terminal Gly of ATG12. Also interacts with ATG3.

It is found in the cytoplasm. The protein resides in the preautophagosomal structure. In terms of biological role, E1-like activating enzyme involved in the 2 ubiquitin-like systems required for cytoplasm to vacuole transport (Cvt) and autophagy. Activates ATG12 for its conjugation with ATG5 and ATG8 for its conjugation with phosphatidylethanolamine. Both systems are needed for the ATG8 association to Cvt vesicles and autophagosomes membranes. Autophagy is essential for maintenance of amino acid levels and protein synthesis under nitrogen starvation. Required for selective autophagic degradation of the nucleus (nucleophagy) as well as for mitophagy which contributes to regulate mitochondrial quantity and quality by eliminating the mitochondria to a basal level to fulfill cellular energy requirements and preventing excess ROS production. Required for normal mycelial growth and conidiogenesis, and regulates sclerotial formation. Plays an essential role in pathogenesis. This is Ubiquitin-like modifier-activating enzyme atg7 from Botryotinia fuckeliana (strain BcDW1) (Noble rot fungus).